The chain runs to 300 residues: Glutamyl-Q tRNA(Asp) synthetase (300 aa).

Residues 14–18 (RFAPT) and Glu50 contribute to the L-glutamate site. Positions 17–27 (PTPSGFLHFGS) match the 'HIGH' region motif. The Zn(2+) site is built by Cys106, Cys108, Tyr120, and Cys124. Tyr177 and Arg195 together coordinate L-glutamate. Residues 233–237 (KLGKS) carry the 'KMSKS' region motif. Lys236 serves as a coordination point for ATP.

The protein belongs to the class-I aminoacyl-tRNA synthetase family. GluQ subfamily. The cofactor is Zn(2+).

Functionally, catalyzes the tRNA-independent activation of glutamate in presence of ATP and the subsequent transfer of glutamate onto a tRNA(Asp). Glutamate is transferred on the 2-amino-5-(4,5-dihydroxy-2-cyclopenten-1-yl) moiety of the queuosine in the wobble position of the QUC anticodon. This chain is Glutamyl-Q tRNA(Asp) synthetase, found in Pseudomonas putida (strain ATCC 47054 / DSM 6125 / CFBP 8728 / NCIMB 11950 / KT2440).